The sequence spans 204 residues: Cardiotrophin-2 (204 aa).

The N-terminal stretch at 1 to 22 (MYCLLATPLCLLSLLLPPLSPA) is a signal peptide. Asn-44 carries N-linked (GlcNAc...) asparagine glycosylation.

This sequence belongs to the IL-6 superfamily. As to quaternary structure, binds to tripartite CNTF receptor complex consisting of CNTF alpha chain, LIFR and IL6ST (in vitro). As to expression, not detected in adult tissues.

It localises to the secreted. In terms of biological role, increases the platelet count associated with splenomegaly. May have an important role in neuronal precursor development and maturation. This is Cardiotrophin-2 (Ctf2) from Mus musculus (Mouse).